The chain runs to 132 residues: D-ribose pyranase (132 aa).

Histidine 20 acts as the Proton donor in catalysis. Substrate is bound by residues aspartate 28, histidine 99, and 121–123 (YSN).

The protein belongs to the RbsD / FucU family. RbsD subfamily. In terms of assembly, homodecamer.

It is found in the cytoplasm. It carries out the reaction beta-D-ribopyranose = beta-D-ribofuranose. It functions in the pathway carbohydrate metabolism; D-ribose degradation; D-ribose 5-phosphate from beta-D-ribopyranose: step 1/2. In terms of biological role, catalyzes the interconversion of beta-pyran and beta-furan forms of D-ribose. This chain is D-ribose pyranase, found in Lactococcus lactis subsp. cremoris (strain SK11).